Consider the following 173-residue polypeptide: ATP-dependent protease subunit HslV (173 aa).

Thr2 is a catalytic residue. Positions 158, 161, and 164 each coordinate Na(+).

It belongs to the peptidase T1B family. HslV subfamily. As to quaternary structure, a double ring-shaped homohexamer of HslV is capped on each side by a ring-shaped HslU homohexamer. The assembly of the HslU/HslV complex is dependent on binding of ATP.

It localises to the cytoplasm. It carries out the reaction ATP-dependent cleavage of peptide bonds with broad specificity.. With respect to regulation, allosterically activated by HslU binding. In terms of biological role, protease subunit of a proteasome-like degradation complex believed to be a general protein degrading machinery. This chain is ATP-dependent protease subunit HslV, found in Mannheimia succiniciproducens (strain KCTC 0769BP / MBEL55E).